Here is a 938-residue protein sequence, read N- to C-terminus: Ankyrin repeat and LEM domain-containing protein 2 (938 aa).

Residues 1–12 (MLWPRLAAAEWA) are Lumenal-facing. A helical; Signal-anchor for type III membrane protein membrane pass occupies residues 13 to 32 (ALAWELLGASVLLIAVRWLV). Residues 33-938 (RRLGPRPGGL…MARLAELAAL (906 aa)) are Cytoplasmic-facing. In terms of domain architecture, LEM spans 69-113 (LARLKLLNPDDLREEIVKAGLKCGPITSTTRFIFEKKLAQALLEQ). Phosphoserine is present on residues Ser259 and Ser268. An ANK repeat occupies 411–440 (GYDTPLHFACKFGNADVVNVLSSHHLIVKN). A phosphoserine mark is found at Ser488, Ser496, Ser512, and Ser528. Basic and acidic residues predominate over residues 609-627 (GKKAQQETGEREASCRDKA). A disordered region spans residues 609-636 (GKKAQQETGEREASCRDKATTSGSNSIS). Phosphoserine is present on residues Ser662, Ser804, Ser896, and Ser914. A disordered region spans residues 870–924 (RQSWPSPAVKGRFKSQLPDLSGPHSYSPGRNSVAGSNPAKPGLGSPGRYSPVHGS).

This sequence belongs to the ANKLE2 family. In terms of assembly, interacts with BAF/BANF1. Interacts with protein phosphatase 2A (PP2A) components PPP2C (PPP2CA or PPP2CB) and PPP2R1A. (Microbial infection) May interact with non-structural protein 4A/NS4A from Zika virus strains Mr-766 or French Polynesia 10087PF/2013; the interaction may inhibit ANKLE2 function and contribute to defects in brain development, such as microcephaly.

The protein resides in the endoplasmic reticulum membrane. Its function is as follows. Involved in mitotic nuclear envelope reassembly by promoting dephosphorylation of BAF/BANF1 during mitotic exit. Coordinates the control of BAF/BANF1 dephosphorylation by inhibiting VRK1 kinase and promoting dephosphorylation of BAF/BANF1 by protein phosphatase 2A (PP2A), thereby facilitating nuclear envelope assembly. May regulate nuclear localization of VRK1 in non-dividing cells. It is unclear whether it acts as a real PP2A regulatory subunit or whether it is involved in recruitment of the PP2A complex. Involved in brain development. In Homo sapiens (Human), this protein is Ankyrin repeat and LEM domain-containing protein 2 (ANKLE2).